The sequence spans 198 residues: Segregation and condensation protein B (198 aa).

The disordered stretch occupies residues 169–198 (LADPAAEEPDQNEMDLFFDRFNQSKEQEEE).

The protein belongs to the ScpB family. As to quaternary structure, homodimer. Homodimerization may be required to stabilize the binding of ScpA to the Smc head domains. Component of a cohesin-like complex composed of ScpA, ScpB and the Smc homodimer, in which ScpA and ScpB bind to the head domain of Smc. The presence of the three proteins is required for the association of the complex with DNA.

The protein localises to the cytoplasm. Participates in chromosomal partition during cell division. May act via the formation of a condensin-like complex containing Smc and ScpA that pull DNA away from mid-cell into both cell halves. The chain is Segregation and condensation protein B from Listeria monocytogenes serotype 4a (strain HCC23).